Consider the following 461-residue polypeptide: Cysteine--tRNA ligase (461 aa).

Residue C29 participates in Zn(2+) binding. Positions M31–H41 match the 'HIGH' region motif. Zn(2+) is bound by residues C210, H235, and E239. Residues K267 to S271 carry the 'KMSKS' region motif. Residue K270 coordinates ATP.

Belongs to the class-I aminoacyl-tRNA synthetase family. Monomer. Zn(2+) serves as cofactor.

Its subcellular location is the cytoplasm. The enzyme catalyses tRNA(Cys) + L-cysteine + ATP = L-cysteinyl-tRNA(Cys) + AMP + diphosphate. This is Cysteine--tRNA ligase from Ectopseudomonas mendocina (strain ymp) (Pseudomonas mendocina).